The primary structure comprises 324 residues: Putative ribose-phosphate pyrophosphokinase 1 (324 aa).

ATP is bound by residues 43-45 (DGE) and 102-103 (RQ). His-136 is a binding site for Mg(2+). Residues Asp-225 and 229-233 (NTGQT) each bind D-ribose 5-phosphate.

Belongs to the ribose-phosphate pyrophosphokinase family. Class I subfamily. In terms of assembly, homohexamer. Requires Mg(2+) as cofactor.

The protein resides in the cytoplasm. The enzyme catalyses D-ribose 5-phosphate + ATP = 5-phospho-alpha-D-ribose 1-diphosphate + AMP + H(+). The protein operates within metabolic intermediate biosynthesis; 5-phospho-alpha-D-ribose 1-diphosphate biosynthesis; 5-phospho-alpha-D-ribose 1-diphosphate from D-ribose 5-phosphate (route I): step 1/1. Involved in the biosynthesis of the central metabolite phospho-alpha-D-ribosyl-1-pyrophosphate (PRPP) via the transfer of pyrophosphoryl group from ATP to 1-hydroxyl of ribose-5-phosphate (Rib-5-P). The protein is Putative ribose-phosphate pyrophosphokinase 1 of Enterococcus faecalis (strain ATCC 700802 / V583).